Here is a 249-residue protein sequence, read N- to C-terminus: Proteasome subunit alpha type-7 (249 aa).

Belongs to the peptidase T1A family. In terms of assembly, the 26S proteasome consists of a 20S proteasome core and two 19S regulatory subunits. The 20S proteasome core is composed of 28 subunits that are arranged in four stacked rings, resulting in a barrel-shaped structure. The two end rings are each formed by seven alpha subunits, and the two central rings are each formed by seven beta subunits. The catalytic chamber with the active sites is on the inside of the barrel.

The protein localises to the cytoplasm. It localises to the nucleus. Its function is as follows. The proteasome is a multicatalytic proteinase complex which is characterized by its ability to cleave peptides with Arg, Phe, Tyr, Leu, and Glu adjacent to the leaving group at neutral or slightly basic pH. The proteasome has an ATP-dependent proteolytic activity. In Cicer arietinum (Chickpea), this protein is Proteasome subunit alpha type-7 (PAD1).